The primary structure comprises 842 residues: Protein translocase subunit SecA 1 (842 aa).

Residues Gln85, 103–107, and Asp493 contribute to the ATP site; that span reads GEGKT. Positions 824, 826, 835, and 836 each coordinate Zn(2+).

The protein belongs to the SecA family. In terms of assembly, monomer and homodimer. Part of the essential Sec protein translocation apparatus which comprises SecA, SecYEG and auxiliary proteins SecDF. Other proteins may also be involved. The cofactor is Zn(2+).

It is found in the cell membrane. The protein resides in the cytoplasm. The catalysed reaction is ATP + H2O + cellular proteinSide 1 = ADP + phosphate + cellular proteinSide 2.. Functionally, part of the Sec protein translocase complex. Interacts with the SecYEG preprotein conducting channel. Has a central role in coupling the hydrolysis of ATP to the transfer of proteins into and across the cell membrane, serving as an ATP-driven molecular motor driving the stepwise translocation of polypeptide chains across the membrane. The chain is Protein translocase subunit SecA 1 from Streptococcus agalactiae serotype Ia (strain ATCC 27591 / A909 / CDC SS700).